Consider the following 371-residue polypeptide: E3 ubiquitin-protein ligase RHF1A (371 aa).

The segment at 46 to 87 (CSICLEPFTLQDPSTVTSCKHEYHLQCIIEWSQRSKECPICW) adopts an RING-type; atypical zinc-finger fold. Disordered regions lie at residues 199-254 (HQNS…SSLP) and 348-371 (EANSKSNNNGDKTEPQKLQGGETC). Residues 200–225 (QNSNPCPSPGSMTPSPVSGHSSIPAD) show a composition bias toward polar residues. The span at 226–252 (SNNGSRISPGPSPSRSSQSPKSPEASS) shows a compositional bias: low complexity.

In terms of assembly, interacts with KRP6. As to expression, expressed in stems, flowers, green siliques, cauline leaves, seeds and roots.

The enzyme catalyses S-ubiquitinyl-[E2 ubiquitin-conjugating enzyme]-L-cysteine + [acceptor protein]-L-lysine = [E2 ubiquitin-conjugating enzyme]-L-cysteine + N(6)-ubiquitinyl-[acceptor protein]-L-lysine.. The protein operates within protein modification; protein ubiquitination. Functionally, E3 ubiquitin-protein ligase involved in the positive regulation of the gametogenesis progression. Mediates the proteasomal degradation of KRP6, a cyclin-dependent kinase inhibitor which accumulates during meiosis and blocks the progression of subsequent mitoses during gametophyte development. Functions in association with RHF2A. Possesses E3 ubiquitin-protein ligase activity when associated with the E2 enzyme UBC8 in vitro. This Arabidopsis thaliana (Mouse-ear cress) protein is E3 ubiquitin-protein ligase RHF1A.